We begin with the raw amino-acid sequence, 364 residues long: DNA polymerase IV (364 aa).

A UmuC domain is found at 14–198 (IIHIDMDAFF…LPIEKFHGVG (185 aa)). 2 residues coordinate Mg(2+): Asp18 and Asp116. The active site involves Glu117.

The protein belongs to the DNA polymerase type-Y family. In terms of assembly, monomer. Requires Mg(2+) as cofactor.

The protein localises to the cytoplasm. It catalyses the reaction DNA(n) + a 2'-deoxyribonucleoside 5'-triphosphate = DNA(n+1) + diphosphate. Functionally, poorly processive, error-prone DNA polymerase involved in untargeted mutagenesis. Copies undamaged DNA at stalled replication forks, which arise in vivo from mismatched or misaligned primer ends. These misaligned primers can be extended by PolIV. Exhibits no 3'-5' exonuclease (proofreading) activity. May be involved in translesional synthesis, in conjunction with the beta clamp from PolIII. This chain is DNA polymerase IV, found in Streptococcus pyogenes serotype M5 (strain Manfredo).